A 258-amino-acid chain; its full sequence is Indole-3-glycerol phosphate synthase (258 aa).

It belongs to the TrpC family.

The catalysed reaction is 1-(2-carboxyphenylamino)-1-deoxy-D-ribulose 5-phosphate + H(+) = (1S,2R)-1-C-(indol-3-yl)glycerol 3-phosphate + CO2 + H2O. The protein operates within amino-acid biosynthesis; L-tryptophan biosynthesis; L-tryptophan from chorismate: step 4/5. This chain is Indole-3-glycerol phosphate synthase, found in Campylobacter fetus subsp. fetus (strain 82-40).